A 262-amino-acid polypeptide reads, in one-letter code: Putative hydro-lyase Sca_2211 (262 aa).

This sequence belongs to the D-glutamate cyclase family.

The sequence is that of Putative hydro-lyase Sca_2211 from Staphylococcus carnosus (strain TM300).